The sequence spans 275 residues: Myb/SANT-like DNA-binding domain-containing protein 3 (275 aa).

One can recognise a Myb-like domain in the interval 13 to 78; sequence FSELEKSILL…QLKKCWENIK (66 aa). Ser96 and Ser98 each carry phosphoserine. Lys154 is covalently cross-linked (Glycyl lysine isopeptide (Lys-Gly) (interchain with G-Cter in SUMO2)). Residues 211–247 adopt a coiled-coil conformation; it reads QLIQMNEVHVAKIQQIERECEMAEEEHRIKMEVLNKK. A Phosphoserine modification is found at Ser274.

Belongs to the MSANTD3 family. As to expression, expressed in brain.

This Homo sapiens (Human) protein is Myb/SANT-like DNA-binding domain-containing protein 3 (MSANTD3).